A 103-amino-acid chain; its full sequence is Large ribosomal subunit protein bL21 (103 aa).

This sequence belongs to the bacterial ribosomal protein bL21 family. In terms of assembly, part of the 50S ribosomal subunit. Contacts protein L20.

Functionally, this protein binds to 23S rRNA in the presence of protein L20. In Ruthia magnifica subsp. Calyptogena magnifica, this protein is Large ribosomal subunit protein bL21.